Consider the following 341-residue polypeptide: S-adenosylmethionine:tRNA ribosyltransferase-isomerase (341 aa).

It belongs to the QueA family. As to quaternary structure, monomer.

It localises to the cytoplasm. It catalyses the reaction 7-aminomethyl-7-carbaguanosine(34) in tRNA + S-adenosyl-L-methionine = epoxyqueuosine(34) in tRNA + adenine + L-methionine + 2 H(+). It functions in the pathway tRNA modification; tRNA-queuosine biosynthesis. Its function is as follows. Transfers and isomerizes the ribose moiety from AdoMet to the 7-aminomethyl group of 7-deazaguanine (preQ1-tRNA) to give epoxyqueuosine (oQ-tRNA). This chain is S-adenosylmethionine:tRNA ribosyltransferase-isomerase, found in Clostridium kluyveri (strain NBRC 12016).